Consider the following 363-residue polypeptide: MLKVGSSLLAADGGGLSPRFALGLAQFVSANLAAGRELVIVSSGAVAAGRAILPKAMDVGAPIAARQALAALGQAQLIALWQRFFERPVAQVLLTHDDLRNRRRYLNARATLGELLRLGALPVINENDTVSVDELKLGDNDNLAAIVAALVDADALFIATDIDGLYSADPRSNPLARPLDDVPELTPEVLAMAGGSGSNVGTGGMRTKLEAAAKAGAAGIETYLFNGRSGEVVRALALDRLRGTRIHAARTRIAARKYWLRHAPVEAGAILIDDGAAAALTGKGASLLPGGVAGAQGDFRRGDMVEIRRRDTTGDGQCLARGVSQYSALDIRRIAGRHSREIENVLGYSYGENVVHRDDLVVL.

ATP is bound at residue lysine 3. Residues serine 43, aspartate 128, and asparagine 140 each coordinate substrate. ATP-binding positions include 160–161 and 202–208; these read TD and TGGMRTK. Residues 267 to 349 form the PUA domain; that stretch reads AGAILIDDGA…REIENVLGYS (83 aa).

This sequence belongs to the glutamate 5-kinase family.

Its subcellular location is the cytoplasm. The catalysed reaction is L-glutamate + ATP = L-glutamyl 5-phosphate + ADP. It functions in the pathway amino-acid biosynthesis; L-proline biosynthesis; L-glutamate 5-semialdehyde from L-glutamate: step 1/2. Catalyzes the transfer of a phosphate group to glutamate to form L-glutamate 5-phosphate. In Xanthomonas axonopodis pv. citri (strain 306), this protein is Glutamate 5-kinase.